Here is a 298-residue protein sequence, read N- to C-terminus: Tyrosine recombinase XerC (298 aa).

In terms of domain architecture, Core-binding (CB) spans 1–84 (MNHIQEAFLN…TLRTFYEYWM (84 aa)). Positions 105–286 (YLPQFFYEEE…SNQQLRKVYL (182 aa)) constitute a Tyr recombinase domain. Residues Arg-145, Lys-169, His-238, Arg-241, and His-264 contribute to the active site. The O-(3'-phospho-DNA)-tyrosine intermediate role is filled by Tyr-273.

It belongs to the 'phage' integrase family. XerC subfamily. In terms of assembly, forms a cyclic heterotetrameric complex composed of two molecules of XerC and two molecules of XerD.

The protein localises to the cytoplasm. In terms of biological role, site-specific tyrosine recombinase, which acts by catalyzing the cutting and rejoining of the recombining DNA molecules. The XerC-XerD complex is essential to convert dimers of the bacterial chromosome into monomers to permit their segregation at cell division. It also contributes to the segregational stability of plasmids. The protein is Tyrosine recombinase XerC of Staphylococcus aureus (strain Mu3 / ATCC 700698).